A 158-amino-acid polypeptide reads, in one-letter code: Phosphopantetheine adenylyltransferase (158 aa).

Substrate is bound at residue Thr10. Residues 10–11 (TF) and His18 each bind ATP. The substrate site is built by Lys42, Leu74, and Arg88. Residues 89–91 (GIR), Glu99, and 124–130 (WRYLSST) each bind ATP.

The protein belongs to the bacterial CoaD family. In terms of assembly, homohexamer. Mg(2+) serves as cofactor.

The protein localises to the cytoplasm. The enzyme catalyses (R)-4'-phosphopantetheine + ATP + H(+) = 3'-dephospho-CoA + diphosphate. The protein operates within cofactor biosynthesis; coenzyme A biosynthesis; CoA from (R)-pantothenate: step 4/5. Its function is as follows. Reversibly transfers an adenylyl group from ATP to 4'-phosphopantetheine, yielding dephospho-CoA (dPCoA) and pyrophosphate. The sequence is that of Phosphopantetheine adenylyltransferase from Actinobacillus pleuropneumoniae serotype 5b (strain L20).